The primary structure comprises 162 residues: Meiosis-specific protein HED1 (162 aa).

A disordered region spans residues 67 to 124; the sequence is KNLSENTGGGSPNGGAYLDAKKGVREQDQYQGGPSKELDRLQPPPSMKKSPPRKKKSL. The segment covering 85 to 94 has biased composition (basic and acidic residues); the sequence is DAKKGVREQD.

As to quaternary structure, interacts with RAD51.

It localises to the nucleus. The protein localises to the chromosome. In terms of biological role, involved in regulation of meiotic recombination and repair of DNA damage. Inhibits RAD51-mediated recombination when the meiotic recombination machinery is impaired. This chain is Meiosis-specific protein HED1 (HED1), found in Saccharomyces cerevisiae (strain ATCC 204508 / S288c) (Baker's yeast).